A 961-amino-acid polypeptide reads, in one-letter code: Leucine-rich repeat-containing protein egg-6 (961 aa).

The signal sequence occupies residues 1 to 18 (MRWLTLIAVAHLIAFLSS). Residues 19–854 (AEITCPRIPE…EQNERHRNIR (836 aa)) lie on the Extracellular side of the membrane. LRR repeat units lie at residues 60 to 78 (IDEL…SLPF), 79 to 101 (NGLR…AWRH), 103 to 124 (EATI…VFGN), 125 to 148 (LSTL…AFNG), 150 to 172 (SALT…SLDA), 174 to 197 (KASL…ILRN), 199 to 222 (ANLM…LMNL), 223 to 245 (PFLR…AFMN), 247 to 269 (PQLQ…RLQG), 270 to 294 (FKNL…DLPN), 305 to 316 (ITKIETLAFSNN), 317 to 339 (PNLQ…SFES), 340 to 363 (LDKL…MFDG), 364 to 387 (MKNL…SFAQ), 388 to 411 (LAHL…TFDK), 413 to 435 (SKLF…VFKK), and 437 to 455 (ISNI…SFNE). The chain crosses the membrane as a helical span at residues 855-875 (IITAIALAFVGAVTVVVIIFF). Residues 876–961 (VNYTKKQRRL…PQAVSHRSRH (86 aa)) are Cytoplasmic-facing. The disordered stretch occupies residues 890–943 (VYRSSPSSSGSSGQNAANESGRSSAAPSPIRPPLMNIPKTPNNRTMESTFGQPQ). A compositionally biased stretch (low complexity) spans 893-902 (SSPSSSGSSG). Residues 928–943 (KTPNNRTMESTFGQPQ) are compositionally biased toward polar residues.

As to expression, in L1 larvae, expressed in a subset of epithelial cells including epidermal, vulval and rectal cells and the excretory duct and pore. Also detected in some neurons. Absent from internal epithelia such as the gut and pharyngeal tubes.

Its subcellular location is the apical cell membrane. In terms of biological role, required for apical extracellular matrix organization and epithelial junction maintenance. The protein is Leucine-rich repeat-containing protein egg-6 of Caenorhabditis elegans.